Reading from the N-terminus, the 303-residue chain is Bifunctional protein FolD (303 aa).

NADP(+) contacts are provided by residues 168–170 (GRS), Thr-197, and Val-238.

Belongs to the tetrahydrofolate dehydrogenase/cyclohydrolase family. In terms of assembly, homodimer.

It carries out the reaction (6R)-5,10-methylene-5,6,7,8-tetrahydrofolate + NADP(+) = (6R)-5,10-methenyltetrahydrofolate + NADPH. It catalyses the reaction (6R)-5,10-methenyltetrahydrofolate + H2O = (6R)-10-formyltetrahydrofolate + H(+). It functions in the pathway one-carbon metabolism; tetrahydrofolate interconversion. In terms of biological role, catalyzes the oxidation of 5,10-methylenetetrahydrofolate to 5,10-methenyltetrahydrofolate and then the hydrolysis of 5,10-methenyltetrahydrofolate to 10-formyltetrahydrofolate. The sequence is that of Bifunctional protein FolD from Desulfosudis oleivorans (strain DSM 6200 / JCM 39069 / Hxd3) (Desulfococcus oleovorans).